Here is a 798-residue protein sequence, read N- to C-terminus: Peregrinol diphosphate synthase TPS1, chloroplastic (798 aa).

The transit peptide at 1-25 (MASLSTPNINNTTFVNSKTQLPAVK) directs the protein to the chloroplast. Substrate is bound at residue lysine 243. Residues aspartate 377 and aspartate 379 each contribute to the Mg(2+) site. The short motif at 377–380 (DLDD) is the DXDD motif element. A substrate-binding site is contributed by lysine 463.

This sequence belongs to the terpene synthase family. The cofactor is Mg(2+). In terms of tissue distribution, mostly expressed in trichomes of leaves and fruits.

It is found in the plastid. It localises to the chloroplast. It catalyses the reaction peregrinol diphosphate = (2E,6E,10E)-geranylgeranyl diphosphate + H2O. Its pathway is secondary metabolite biosynthesis; terpenoid biosynthesis. Its function is as follows. Involved in the biosynthesis of labdane-type diterpenoid including cleroda-dienols, and peregrinol lactones and furan derivatives, dopaminergic diterpenoids that can bind to dopamine receptors in the human pituitary gland, have probably ability to lower prolactin levels, and are used to treat menstrual cycle disorders (e.g. premenstrual syndrome and mastodynia). Terpene synthase that produces peregrinol diphosphate from geranylgeranyl diphosphate (GGPP). The protein is Peregrinol diphosphate synthase TPS1, chloroplastic of Vitex agnus-castus (Chaste tree).